Here is a 299-residue protein sequence, read N- to C-terminus: GTPase Era (299 aa).

In terms of domain architecture, Era-type G spans 4-171 (KSGFVAILGR…VDILSENLDE (168 aa)). Positions 12–19 (GRPNVGKS) are G1. GTP is bound at residue 12–19 (GRPNVGKS). A G2 region spans residues 38–42 (QTTRN). A G3 region spans residues 59-62 (DTPG). GTP contacts are provided by residues 59–63 (DTPGI) and 121–124 (NKID). The G4 stretch occupies residues 121–124 (NKID). The G5 stretch occupies residues 150-152 (ISA). The 79-residue stretch at 202–280 (TREEIPHSVA…FLETWVKVKK (79 aa)) folds into the KH type-2 domain.

This sequence belongs to the TRAFAC class TrmE-Era-EngA-EngB-Septin-like GTPase superfamily. Era GTPase family. As to quaternary structure, monomer.

Its subcellular location is the cytoplasm. It is found in the cell membrane. Its function is as follows. An essential GTPase that binds both GDP and GTP, with rapid nucleotide exchange. Plays a role in 16S rRNA processing and 30S ribosomal subunit biogenesis and possibly also in cell cycle regulation and energy metabolism. The chain is GTPase Era from Streptococcus pneumoniae (strain Hungary19A-6).